Consider the following 385-residue polypeptide: tRNA N6-adenosine threonylcarbamoyltransferase (385 aa).

A divalent metal cation is bound by residues His-140, His-144, and Tyr-161. Substrate contacts are provided by residues 161–165, Asp-193, Gly-208, Glu-212, and Asn-314; that span reads YVSGG. Asp-343 is an a divalent metal cation binding site.

This sequence belongs to the KAE1 / TsaD family. In terms of assembly, component of the EKC/KEOPS complex composed of at least BUD32, CGI121, GON7, KAE1 and PCC1; the whole complex dimerizes. Requires a divalent metal cation as cofactor.

Its subcellular location is the cytoplasm. It is found in the nucleus. It carries out the reaction L-threonylcarbamoyladenylate + adenosine(37) in tRNA = N(6)-L-threonylcarbamoyladenosine(37) in tRNA + AMP + H(+). Component of the EKC/KEOPS complex that is required for the formation of a threonylcarbamoyl group on adenosine at position 37 (t(6)A37) in tRNAs that read codons beginning with adenine. The complex is probably involved in the transfer of the threonylcarbamoyl moiety of threonylcarbamoyl-AMP (TC-AMP) to the N6 group of A37. KAE1 likely plays a direct catalytic role in this reaction, but requires other protein(s) of the complex to fulfill this activity. The EKC/KEOPS complex also promotes both telomere uncapping and telomere elongation. The complex is required for efficient recruitment of transcriptional coactivators. This chain is tRNA N6-adenosine threonylcarbamoyltransferase, found in Eremothecium gossypii (strain ATCC 10895 / CBS 109.51 / FGSC 9923 / NRRL Y-1056) (Yeast).